Consider the following 476-residue polypeptide: Ribulose bisphosphate carboxylase/oxygenase activase 1, chloroplastic (476 aa).

The transit peptide at 1-56 (MAAAYSTVGAVNRAPLSLNGSGARASLVPSTAFFGSSLKKSAAKFPKASSGNFKIV) directs the protein to the chloroplast. ATP is bound at residue 165–172 (GGKGQGKS).

It belongs to the RuBisCO activase family.

It is found in the plastid. It localises to the chloroplast stroma. Functionally, activation of RuBisCO (ribulose-1,5-bisphosphate carboxylase/oxygenase; EC 4.1.1.39) involves the ATP-dependent carboxylation of the epsilon-amino group of lysine leading to a carbamate structure. This is Ribulose bisphosphate carboxylase/oxygenase activase 1, chloroplastic (RCA1) from Larrea tridentata (Creosote bush).